We begin with the raw amino-acid sequence, 198 residues long: Carnitine operon protein CaiE (198 aa).

The disordered stretch occupies residues 179–198 (VEENRPRLKGTTDVKPKSAQ). A compositionally biased stretch (basic and acidic residues) spans 180-198 (EENRPRLKGTTDVKPKSAQ).

Belongs to the transferase hexapeptide repeat family.

Its pathway is amine and polyamine metabolism; carnitine metabolism. Its function is as follows. Overproduction of CaiE stimulates the activity of CaiB and CaiD. This is Carnitine operon protein CaiE from Salmonella enteritidis PT4 (strain P125109).